A 443-amino-acid polypeptide reads, in one-letter code: 23S rRNA (uracil(1939)-C(5))-methyltransferase RlmD (443 aa).

Residues 10–68 form the TRAM domain; it reads RVTTKQTLTVTVNSLDPFGQGVAHHQGKAIFIPGALPGEQAEIELTEQKRQYSRGKLKR. Positions 81, 87, 90, and 168 each coordinate [4Fe-4S] cluster. The S-adenosyl-L-methionine site is built by glutamine 271, phenylalanine 300, asparagine 305, glutamate 321, asparagine 348, and aspartate 369. Catalysis depends on cysteine 395, which acts as the Nucleophile.

The protein belongs to the class I-like SAM-binding methyltransferase superfamily. RNA M5U methyltransferase family. RlmD subfamily.

The catalysed reaction is uridine(1939) in 23S rRNA + S-adenosyl-L-methionine = 5-methyluridine(1939) in 23S rRNA + S-adenosyl-L-homocysteine + H(+). Its function is as follows. Catalyzes the formation of 5-methyl-uridine at position 1939 (m5U1939) in 23S rRNA. This Yersinia enterocolitica serotype O:8 / biotype 1B (strain NCTC 13174 / 8081) protein is 23S rRNA (uracil(1939)-C(5))-methyltransferase RlmD.